The primary structure comprises 392 residues: 3-ketoacyl-CoA thiolase (392 aa).

Cysteine 95 serves as the catalytic Acyl-thioester intermediate. Active-site proton acceptor residues include histidine 347 and cysteine 377.

Belongs to the thiolase-like superfamily. Thiolase family. In terms of assembly, heterotetramer of two alpha chains (FadB) and two beta chains (FadA).

It is found in the cytoplasm. The enzyme catalyses an acyl-CoA + acetyl-CoA = a 3-oxoacyl-CoA + CoA. The protein operates within lipid metabolism; fatty acid beta-oxidation. Functionally, catalyzes the final step of fatty acid oxidation in which acetyl-CoA is released and the CoA ester of a fatty acid two carbons shorter is formed. The polypeptide is 3-ketoacyl-CoA thiolase (Chromohalobacter salexigens (strain ATCC BAA-138 / DSM 3043 / CIP 106854 / NCIMB 13768 / 1H11)).